The following is a 282-amino-acid chain: 3-methyl-2-oxobutanoate hydroxymethyltransferase (282 aa).

Mg(2+) contacts are provided by aspartate 46 and aspartate 85. 3-methyl-2-oxobutanoate contacts are provided by residues 46–47 (DS), aspartate 85, and lysine 115. A Mg(2+)-binding site is contributed by glutamate 117. Glutamate 184 serves as the catalytic Proton acceptor.

It belongs to the PanB family. Homodecamer; pentamer of dimers. The cofactor is Mg(2+).

Its subcellular location is the cytoplasm. The enzyme catalyses 3-methyl-2-oxobutanoate + (6R)-5,10-methylene-5,6,7,8-tetrahydrofolate + H2O = 2-dehydropantoate + (6S)-5,6,7,8-tetrahydrofolate. Its pathway is cofactor biosynthesis; (R)-pantothenate biosynthesis; (R)-pantoate from 3-methyl-2-oxobutanoate: step 1/2. Functionally, catalyzes the reversible reaction in which hydroxymethyl group from 5,10-methylenetetrahydrofolate is transferred onto alpha-ketoisovalerate to form ketopantoate. In Alkaliphilus metalliredigens (strain QYMF), this protein is 3-methyl-2-oxobutanoate hydroxymethyltransferase.